Here is a 399-residue protein sequence, read N- to C-terminus: Ribonuclease T2-like 1-A (399 aa).

An N-terminal signal peptide occupies residues 1–17; sequence MLSILSIAALLIATVQA. Disulfide bonds link Cys-24-Cys-43, Cys-32-Cys-79, Cys-42-Cys-150, Cys-87-Cys-142, and Cys-214-Cys-249. Residues His-72, Glu-135, and His-139 contribute to the active site. The segment at 259 to 279 is disordered; sequence KGNSGANTLTTKTTGTTTSGS. A compositionally biased stretch (low complexity) spans 262 to 279; it reads SGANTLTTKTTGTTTSGS. N-linked (GlcNAc...) asparagine glycosylation occurs at Asn-291.

The protein belongs to the RNase T2 family.

It is found in the vacuole lumen. The protein resides in the cytoplasm. The catalysed reaction is a ribonucleotidyl-ribonucleotide-RNA + H2O = a 3'-end 3'-phospho-ribonucleotide-RNA + a 5'-end dephospho-ribonucleoside-RNA + H(+). Rnase which modulates cell survival under stress conditions. Released from the vacuole to the cytoplasm during stress to promote tRNA and rRNA cleavage and to activate separately a downstream pathway that promotes cell death. Involved in cell size, vacuolar morphology and growth at high temperatures and high salt concentration. This is Ribonuclease T2-like 1-A (RNY1-A) from Candida albicans (strain SC5314 / ATCC MYA-2876) (Yeast).